The following is a 111-amino-acid chain: NADH-ubiquinone oxidoreductase chain 3 (111 aa).

Transmembrane regions (helical) follow at residues 1–21 (MLVLVMVVLFTLVLLFVFYIG), 56–76 (FFIMMLMFVIFDLEVVMFLGI), and 84–104 (LISFFMLLMFIFGGFYMEWWY).

This sequence belongs to the complex I subunit 3 family.

It localises to the mitochondrion membrane. The enzyme catalyses a ubiquinone + NADH + 5 H(+)(in) = a ubiquinol + NAD(+) + 4 H(+)(out). In terms of biological role, core subunit of the mitochondrial membrane respiratory chain NADH dehydrogenase (Complex I) that is believed to belong to the minimal assembly required for catalysis. Complex I functions in the transfer of electrons from NADH to the respiratory chain. The immediate electron acceptor for the enzyme is believed to be ubiquinone. The polypeptide is NADH-ubiquinone oxidoreductase chain 3 (ND3) (Ascaris suum (Pig roundworm)).